A 515-amino-acid polypeptide reads, in one-letter code: Interferon-induced, double-stranded RNA-activated protein kinase (515 aa).

Ala2 carries the N-acetylalanine modification. The region spanning Phe8 to Asn76 is the DRBM 1 domain. Lys68 participates in a covalent cross-link: Glycyl lysine isopeptide (Lys-Gly) (interchain with G-Cter in ISG15). The residue at position 84 (Thr84) is a Phosphothreonine. The region spanning Asn95 to Lys162 is the DRBM 2 domain. Position 96 is a phosphotyrosine; by autocatalysis (Tyr96). Residue Lys154 forms a Glycyl lysine isopeptide (Lys-Gly) (interchain with G-Cter in ISG15) linkage. Position 157 is a phosphotyrosine; by autocatalysis (Tyr157). Residues Glu204–Pro224 are disordered. A Phosphothreonine modification is found at Thr233. The interaction with TRAF5 stretch occupies residues Asp241–Cys515. Positions Phe242 to Arg504 constitute a Protein kinase domain. Ile248 to Val256 lines the ATP pocket. Tyr268 is modified (phosphotyrosine; by autocatalysis). Residue Lys271 participates in ATP binding. Asp376 functions as the Proton acceptor in the catalytic mechanism. Phosphothreonine; by autocatalysis is present on residues Thr409 and Thr414. Ser419 carries the post-translational modification Phosphoserine.

Belongs to the protein kinase superfamily. Ser/Thr protein kinase family. GCN2 subfamily. As to quaternary structure, homodimer. Interacts with DNAJC3 and STRBP. Forms a complex with FANCA, FANCC, FANCG and HSP70. Interacts with ADAR/ADAR1. The inactive form interacts with NCK1. Interacts (via the kinase catalytic domain) with STAT3 (via SH2 domain), TRAF2 (C-terminus), TRAF5 (C-terminus) and TRAF6 (C-terminus). Interacts with MAP2K6, TARBP2, NLRP1, NLRC4 and AIM2. Interacts (via DRBM 1 domain) with DUS2L (via DRBM domain). Interacts with DHX9 (via N-terminus) and this interaction is dependent upon activation of the kinase. The inactive form interacts with GSN. Interacts with IKBKB/IKKB, NPM1, NLRP3 and IRS1. In terms of processing, autophosphorylated on several Ser, Thr and Tyr residues. Autophosphorylation of Thr-414 is dependent on Thr-409 and is stimulated by dsRNA binding and dimerization. Autophosphorylation apparently leads to the activation of the kinase. Tyrosine autophosphorylation is essential for efficient dsRNA-binding, dimerization, and kinase activation. As to expression, expressed in heart, lung, brain, kidney, testes, thymus and bone marrow.

It localises to the cytoplasm. It is found in the nucleus. The protein localises to the perinuclear region. It carries out the reaction L-seryl-[protein] + ATP = O-phospho-L-seryl-[protein] + ADP + H(+). It catalyses the reaction L-threonyl-[protein] + ATP = O-phospho-L-threonyl-[protein] + ADP + H(+). The enzyme catalyses L-tyrosyl-[protein] + ATP = O-phospho-L-tyrosyl-[protein] + ADP + H(+). With respect to regulation, initially produced in an inactive form and is activated by binding to viral dsRNA, which causes dimerization and autophosphorylation in the activation loop and stimulation of function. ISGylation can activate it in the absence of viral infection. Can also be activated by heparin, pro-inflammatory stimuli, growth factors, cytokines, oxidative stress and the cellular protein PRKRA. Activity is markedly stimulated by manganese ions. Activation is blocked by the cellular proteins TARBP2, DUS2L, NPM1, NCK1 and ADAR. Its function is as follows. IFN-induced dsRNA-dependent serine/threonine-protein kinase that phosphorylates the alpha subunit of eukaryotic translation initiation factor 2 (EIF2S1/eIF-2-alpha) and plays a key role in the innate immune response to viral infection. Inhibits viral replication via the integrated stress response (ISR): EIF2S1/eIF-2-alpha phosphorylation in response to viral infection converts EIF2S1/eIF-2-alpha in a global protein synthesis inhibitor, resulting to a shutdown of cellular and viral protein synthesis, while concomitantly initiating the preferential translation of ISR-specific mRNAs, such as the transcriptional activator ATF4. Exerts its antiviral activity on a wide range of DNA and RNA viruses including west nile virus (WNV), sindbis virus (SV), foot-and-mouth virus (FMDV), semliki Forest virus (SFV) and lymphocytic choriomeningitis virus (LCMV). Also involved in the regulation of signal transduction, apoptosis, cell proliferation and differentiation: phosphorylates other substrates including p53/TP53, PPP2R5A, DHX9, ILF3, and IRS1. In addition to serine/threonine-protein kinase activity, also has tyrosine-protein kinase activity and phosphorylates CDK1 at 'Tyr-4' upon DNA damage, facilitating its ubiquitination and proteasomal degradation. Either as an adapter protein and/or via its kinase activity, can regulate various signaling pathways (p38 MAP kinase, NF-kappa-B and insulin signaling pathways) and transcription factors (JUN, STAT1, STAT3, IRF1, ATF3) involved in the expression of genes encoding pro-inflammatory cytokines and IFNs. Activates the NF-kappa-B pathway via interaction with IKBKB and TRAF family of proteins and activates the p38 MAP kinase pathway via interaction with MAP2K6. Can act as both a positive and negative regulator of the insulin signaling pathway (ISP). Negatively regulates ISP by inducing the inhibitory phosphorylation of insulin receptor substrate 1 (IRS1) at 'Ser-312' and positively regulates ISP via phosphorylation of PPP2R5A which activates FOXO1, which in turn up-regulates the expression of insulin receptor substrate 2 (IRS2). Can regulate NLRP3 inflammasome assembly and the activation of NLRP3, NLRP1, AIM2 and NLRC4 inflammasomes. Plays a role in the regulation of the cytoskeleton by binding to gelsolin (GSN), sequestering the protein in an inactive conformation away from actin. In Mus musculus (Mouse), this protein is Interferon-induced, double-stranded RNA-activated protein kinase (Eif2ak2).